The chain runs to 404 residues: Mevalonate kinase (404 aa).

ATP is bound by residues K12, S130, and 135 to 141; that span reads GAGLGSS. Residues S141 and E184 each coordinate Mg(2+). Residue D195 is the Proton acceptor of the active site.

Belongs to the GHMP kinase family. Mevalonate kinase subfamily. Homodimer. The cofactor is Mg(2+).

The protein localises to the cytoplasm. The protein resides in the nucleus. The catalysed reaction is (R)-mevalonate + ATP = (R)-5-phosphomevalonate + ADP + H(+). Its pathway is isoprenoid biosynthesis; isopentenyl diphosphate biosynthesis via mevalonate pathway; isopentenyl diphosphate from (R)-mevalonate: step 1/3. Farnesyl pyrophosphate and geranyl pyrophosphate inhibit mevalonate kinase by binding competitively at the ATP-binding site. In terms of biological role, mevalonate kinase; part of the second module of ergosterol biosynthesis pathway that includes the middle steps of the pathway. Erg12 converts mevalonate into 5-phosphomevalonate. The second module is carried out in the vacuole and involves the formation of farnesyl diphosphate, which is also an important intermediate in the biosynthesis of ubiquinone, dolichol, heme and prenylated proteins. Activity by the mevalonate kinase erg12 first converts mevalonate into 5-phosphomevalonate. 5-phosphomevalonate is then further converted to 5-diphosphomevalonate by the phosphomevalonate kinase erg8. The diphosphomevalonate decarboxylase mvd1 then produces isopentenyl diphosphate. The isopentenyl-diphosphate delta-isomerase idi1 then catalyzes the 1,3-allylic rearrangement of the homoallylic substrate isopentenyl (IPP) to its highly electrophilic allylic isomer, dimethylallyl diphosphate (DMAPP). Finally the farnesyl diphosphate synthase fps1 catalyzes the sequential condensation of isopentenyl pyrophosphate with dimethylallyl pyrophosphate, and then with the resultant geranylpyrophosphate to the ultimate product farnesyl pyrophosphate. This chain is Mevalonate kinase (erg12), found in Schizosaccharomyces pombe (strain 972 / ATCC 24843) (Fission yeast).